The chain runs to 404 residues: Alkane 1-monooxygenase 1 (404 aa).

The next 4 helical transmembrane spans lie at 25–45 (HLWILSVLWPATPIIGLYLVS), 47–67 (TGWSIWYGLVLILWYGLVPLI), 94–114 (VLTYLTVPIHYAALIISAWWV), and 119–139 (IGVFEFLALALSLGIVNGLAL). 2 residues coordinate Fe cation: H143 and H147. The helical transmembrane segment at 151-171 (TFDRWMAKLVLAVVGYGHFFI) threads the bilayer. Residues H173, H177, and H178 each contribute to the Fe cation site. Residues 241 to 261 (VVLYAALLAFFGPLMLIFLPI) traverse the membrane as a helical segment. The Fe cation site is built by H317, H320, and H321.

The protein belongs to the fatty acid desaturase type 1 family. AlkB subfamily. Fe(3+) serves as cofactor.

It is found in the cell inner membrane. The catalysed reaction is octane + 2 reduced [rubredoxin] + O2 + 2 H(+) = 2 oxidized [rubredoxin] + octan-1-ol + H2O. The protein operates within hydrocarbon metabolism; alkane degradation. Functionally, catalyzes the hydroxylation of n-alkanes and fatty acids in the presence of a NADH-rubredoxin reductase and rubredoxin. It preferably hydroxylases C5-C12 hydrocarbons. The polypeptide is Alkane 1-monooxygenase 1 (alkB1) (Alcanivorax borkumensis (strain ATCC 700651 / DSM 11573 / NCIMB 13689 / SK2)).